Here is a 126-residue protein sequence, read N- to C-terminus: Chemocyanin (126 aa).

Residues M1 to S30 form the signal peptide. The region spanning V31–A126 is the Phytocyanin domain. The Cu cation site is built by H69, C109, and H114. Cysteines 82 and 115 form a disulfide.

As to expression, strongly expressed in stigma and style and to a lesser extent in leaves, ovary and petals. Not detected in pollen tubes, mature anthers or roots.

Functionally, diffusible chemotropic factor that induces pollen tube chemotropism. The protein is Chemocyanin of Lilium longiflorum (Trumpet lily).